Here is a 274-residue protein sequence, read N- to C-terminus: 2,3,4,5-tetrahydropyridine-2,6-dicarboxylate N-succinyltransferase (274 aa).

Substrate-binding residues include R104 and D141.

This sequence belongs to the transferase hexapeptide repeat family. As to quaternary structure, homotrimer.

Its subcellular location is the cytoplasm. The enzyme catalyses (S)-2,3,4,5-tetrahydrodipicolinate + succinyl-CoA + H2O = (S)-2-succinylamino-6-oxoheptanedioate + CoA. Its pathway is amino-acid biosynthesis; L-lysine biosynthesis via DAP pathway; LL-2,6-diaminopimelate from (S)-tetrahydrodipicolinate (succinylase route): step 1/3. The protein is 2,3,4,5-tetrahydropyridine-2,6-dicarboxylate N-succinyltransferase of Shigella boydii serotype 4 (strain Sb227).